A 336-amino-acid polypeptide reads, in one-letter code: 3-isopropylmalate dehydrogenase (336 aa).

Substrate is bound by residues Arg87, Arg97, Arg121, and Asp211. 3 residues coordinate Mg(2+): Asp211, Asp235, and Asp239. 271-283 (GSAPDIAGQGIAD) provides a ligand contact to NAD(+).

It belongs to the isocitrate and isopropylmalate dehydrogenases family. LeuB type 2 subfamily. Homodimer. Requires Mg(2+) as cofactor. Mn(2+) is required as a cofactor.

The protein localises to the cytoplasm. It catalyses the reaction (2R,3S)-3-isopropylmalate + NAD(+) = 4-methyl-2-oxopentanoate + CO2 + NADH. It participates in amino-acid biosynthesis; L-leucine biosynthesis; L-leucine from 3-methyl-2-oxobutanoate: step 3/4. Functionally, catalyzes the oxidation of 3-carboxy-2-hydroxy-4-methylpentanoate (3-isopropylmalate) to 3-carboxy-4-methyl-2-oxopentanoate. The product decarboxylates to 4-methyl-2 oxopentanoate. The sequence is that of 3-isopropylmalate dehydrogenase from Mycobacterium bovis (strain ATCC BAA-935 / AF2122/97).